We begin with the raw amino-acid sequence, 356 residues long: AT-hook motif nuclear-localized protein 1 (356 aa).

The segment at 1–127 (MVLNMESTGE…PSHLPPPSSH (127 aa)) is disordered. Residues 49–66 (VTPPPPQPSSHHTAPPPL) are compositionally biased toward pro residues. The segment covering 88–97 (MKKKRGRPRK) has biased composition (basic residues). Residues 89 to 97 (KKKRGRPRK) carry the Bipartite nuclear localization signal motif. Positions 89-101 (KKKRGRPRKYGPD) form a DNA-binding region, a.T hook. The segment covering 106 to 118 (ALSPKPISSAPAP) has biased composition (low complexity). The region spanning 167–309 (GGNFTPHIIT…KHDFMLSSPT (143 aa)) is the PPC domain. The tract at residues 270-287 (GLLVAASPVQVVVGSFLA) is required for nuclear localization. The Nuclear localization signal signature appears at 295–302 (KPKKNKHD).

The protein resides in the nucleus. The protein localises to the nucleoplasm. It localises to the chromosome. Its function is as follows. Transcription factor that specifically binds AT-rich DNA sequences related to the nuclear matrix attachment regions (MARs). May play a function in the positioning of chromatin fibers within the nucleus. The protein is AT-hook motif nuclear-localized protein 1 of Arabidopsis thaliana (Mouse-ear cress).